The sequence spans 356 residues: tRNA N6-adenosine threonylcarbamoyltransferase (356 aa).

His116 and His120 together coordinate Fe cation. Substrate contacts are provided by residues 139-143 (IVSGG), Asp174, Gly187, Asp191, and Asn281. Asp309 serves as a coordination point for Fe cation.

This sequence belongs to the KAE1 / TsaD family. It depends on Fe(2+) as a cofactor.

It localises to the cytoplasm. The catalysed reaction is L-threonylcarbamoyladenylate + adenosine(37) in tRNA = N(6)-L-threonylcarbamoyladenosine(37) in tRNA + AMP + H(+). Its function is as follows. Required for the formation of a threonylcarbamoyl group on adenosine at position 37 (t(6)A37) in tRNAs that read codons beginning with adenine. Is involved in the transfer of the threonylcarbamoyl moiety of threonylcarbamoyl-AMP (TC-AMP) to the N6 group of A37, together with TsaE and TsaB. TsaD likely plays a direct catalytic role in this reaction. The polypeptide is tRNA N6-adenosine threonylcarbamoyltransferase (Frankia alni (strain DSM 45986 / CECT 9034 / ACN14a)).